We begin with the raw amino-acid sequence, 757 residues long: Serine/threonine-protein phosphatase 2A 56 kDa regulatory subunit delta isoform (757 aa).

The segment covering 1–11 (MMRGFKQRLIK) has biased composition (basic residues). 2 disordered regions span residues 1–172 (MMRG…EDHA) and 188–250 (ISNA…NPDT). Residues 12–21 (KTTGSSSSSS) are compositionally biased toward low complexity. Positions 23 to 34 (KKKDKEKEKEKS) are enriched in basic and acidic residues. Composition is skewed to low complexity over residues 35–66 (STTS…GSKS), 86–119 (SSTS…STKK), and 128–147 (QSKQ…SSSS). A compositionally biased stretch (basic and acidic residues) spans 160–172 (TKDDKSTSGEDHA). A compositionally biased stretch (low complexity) spans 197 to 216 (SSDVENGNSNNNNMNINTSN). Polar residues predominate over residues 217 to 228 (TQDANHASSQSI). Thr-242 and Thr-257 each carry phosphothreonine. Residues 734-757 (SFNTASENNTLNEENENDCDSEIQ) form a disordered region. Residues 746–757 (EENENDCDSEIQ) show a composition bias toward acidic residues.

Belongs to the phosphatase 2A regulatory subunit B family. PP2A consists of a common heterodimeric core enzyme, composed of a 36 kDa catalytic subunit (subunit C) and a 65 kDa constant regulatory subunit (PR65 or subunit A), that associates with a variety of regulatory subunits. Proteins that associate with the core dimer include three families of regulatory subunits B (the R2/B/PR55/B55, R3/B''/PR72/PR130/PR59 and R5/B'/B56 families), the 48 kDa variable regulatory subunit, viral proteins, and cell signaling molecules.

The protein resides in the cytoplasm. It is found in the nucleus. Its function is as follows. The B regulatory subunit might modulate substrate selectivity and catalytic activity, and might also direct the localization of the catalytic enzyme to a particular subcellular compartment. Functionally, multicopy suppressor of ROX3 and HSP60. In Saccharomyces cerevisiae (strain ATCC 204508 / S288c) (Baker's yeast), this protein is Serine/threonine-protein phosphatase 2A 56 kDa regulatory subunit delta isoform (RTS1).